The chain runs to 391 residues: MTNQTRNVVVVDCLRTPMGRSKGGAFRHTRAEDLSAHLMKGILARNPQVNPSEIEDIYWGCVQQTLEQGFNIARNAALLAGLPIEIGAVTVNRLCGSSMQALHDGTRAIMTGDAEICLIGGVEHMGHVPMNHGVDFHPGMSKNVAKAAGMMGLTAEMLGKLHGISREQQDEFAARSHARAHAATLEGRFKNEILPTEGHAADGTLFQLDYDEVIRPETTVEGLSQLRPVFDPANGTVTAGTSSALSDGASAMLIMSEEKANELGLKIRARIKGMAIAGCDPSIMGYGPVPATQKALKRAGLAIEDMDVVELNEAFAAQSLPCAKDLGLLEVMDEKVNLNGGAIALGHPLGCSGARISTTLINLMEAKDAKYGLATMCIGLGQGIATVFERP.

Residue cysteine 95 is the Acyl-thioester intermediate of the active site. Active-site proton acceptor residues include histidine 347 and cysteine 377.

It belongs to the thiolase-like superfamily. Thiolase family. As to quaternary structure, heterotetramer of two alpha chains (FadB) and two beta chains (FadA).

It is found in the cytoplasm. It catalyses the reaction an acyl-CoA + acetyl-CoA = a 3-oxoacyl-CoA + CoA. Its pathway is lipid metabolism; fatty acid beta-oxidation. Functionally, catalyzes the final step of fatty acid oxidation in which acetyl-CoA is released and the CoA ester of a fatty acid two carbons shorter is formed. In Vibrio parahaemolyticus serotype O3:K6 (strain RIMD 2210633), this protein is 3-ketoacyl-CoA thiolase.